The following is a 336-amino-acid chain: Glyceraldehyde-3-phosphate dehydrogenase (336 aa).

NAD(+) is bound by residues 12-13, Asp34, and Arg79; that span reads RI. D-glyceraldehyde 3-phosphate is bound by residues 150 to 152, Thr181, 210 to 211, and Arg233; these read SCT and TG. Cys151 serves as the catalytic Nucleophile. Asn315 contacts NAD(+).

The protein belongs to the glyceraldehyde-3-phosphate dehydrogenase family. As to quaternary structure, homotetramer.

It localises to the cytoplasm. It carries out the reaction D-glyceraldehyde 3-phosphate + phosphate + NAD(+) = (2R)-3-phospho-glyceroyl phosphate + NADH + H(+). It participates in carbohydrate degradation; glycolysis; pyruvate from D-glyceraldehyde 3-phosphate: step 1/5. Functionally, involved in osmoadaptation. This chain is Glyceraldehyde-3-phosphate dehydrogenase (gpdA), found in Emericella nidulans (strain FGSC A4 / ATCC 38163 / CBS 112.46 / NRRL 194 / M139) (Aspergillus nidulans).